Here is a 202-residue protein sequence, read N- to C-terminus: LexA repressor 2 (202 aa).

The H-T-H motif DNA-binding region spans 28–48; the sequence is LAEISEAFGFASRSVARKHIV. Active-site for autocatalytic cleavage activity residues include S123 and K160.

The protein belongs to the peptidase S24 family. As to quaternary structure, homodimer.

It carries out the reaction Hydrolysis of Ala-|-Gly bond in repressor LexA.. In terms of biological role, represses a number of genes involved in the response to DNA damage (SOS response), including recA and lexA. In the presence of single-stranded DNA, RecA interacts with LexA causing an autocatalytic cleavage which disrupts the DNA-binding part of LexA, leading to derepression of the SOS regulon and eventually DNA repair. This chain is LexA repressor 2, found in Pseudomonas syringae pv. tomato (strain ATCC BAA-871 / DC3000).